The following is a 118-amino-acid chain: Large ribosomal subunit protein bL20 (118 aa).

It belongs to the bacterial ribosomal protein bL20 family.

In terms of biological role, binds directly to 23S ribosomal RNA and is necessary for the in vitro assembly process of the 50S ribosomal subunit. It is not involved in the protein synthesizing functions of that subunit. The chain is Large ribosomal subunit protein bL20 from Sulfurihydrogenibium sp. (strain YO3AOP1).